Reading from the N-terminus, the 1241-residue chain is ATP-dependent helicase/nuclease subunit A (1241 aa).

Residues 12–485 (SQWTDDQWKA…IDLAKNFRSR (474 aa)) enclose the UvrD-like helicase ATP-binding domain. An ATP-binding site is contributed by 33-40 (AAAGSGKT). The 301-residue stretch at 505-805 (GEIDYDADAE…RIMTIHKSKG (301 aa)) folds into the UvrD-like helicase C-terminal domain.

It belongs to the helicase family. AddA subfamily. Heterodimer of AddA and AddB/RexB. Mg(2+) is required as a cofactor.

The catalysed reaction is Couples ATP hydrolysis with the unwinding of duplex DNA by translocating in the 3'-5' direction.. It carries out the reaction ATP + H2O = ADP + phosphate + H(+). In terms of biological role, the heterodimer acts as both an ATP-dependent DNA helicase and an ATP-dependent, dual-direction single-stranded exonuclease. Recognizes the chi site generating a DNA molecule suitable for the initiation of homologous recombination. The AddA nuclease domain is required for chi fragment generation; this subunit has the helicase and 3' -&gt; 5' nuclease activities. The protein is ATP-dependent helicase/nuclease subunit A of Bacillus cereus (strain AH187).